A 311-amino-acid chain; its full sequence is Putative tenascin-XA (311 aa).

Disordered regions lie at residues 1–47 (MEDK…EPRL) and 124–150 (LSAEGTTGLAPAGQTSEESRPRLSQLS). Fibronectin type-III domains lie at 41-135 (PPEE…LAPA), 145-249 (RLSQ…SPRD), and 250-311 (LQFS…SCVH).

In terms of tissue distribution, expressed in the adrenal gland.

This is Putative tenascin-XA (TNXA) from Homo sapiens (Human).